The following is a 243-amino-acid chain: Ubiquinone biosynthesis O-methyltransferase (243 aa).

Positions 44, 64, 85, and 129 each coordinate S-adenosyl-L-methionine.

The protein belongs to the methyltransferase superfamily. UbiG/COQ3 family.

It catalyses the reaction a 3-demethylubiquinol + S-adenosyl-L-methionine = a ubiquinol + S-adenosyl-L-homocysteine + H(+). The catalysed reaction is a 3-(all-trans-polyprenyl)benzene-1,2-diol + S-adenosyl-L-methionine = a 2-methoxy-6-(all-trans-polyprenyl)phenol + S-adenosyl-L-homocysteine + H(+). Its pathway is cofactor biosynthesis; ubiquinone biosynthesis. O-methyltransferase that catalyzes the 2 O-methylation steps in the ubiquinone biosynthetic pathway. The protein is Ubiquinone biosynthesis O-methyltransferase of Cronobacter sakazakii (strain ATCC BAA-894) (Enterobacter sakazakii).